We begin with the raw amino-acid sequence, 469 residues long: Uronate isomerase (469 aa).

It belongs to the metallo-dependent hydrolases superfamily. Uronate isomerase family.

The catalysed reaction is D-glucuronate = D-fructuronate. It catalyses the reaction aldehydo-D-galacturonate = keto-D-tagaturonate. Its pathway is carbohydrate metabolism; pentose and glucuronate interconversion. The chain is Uronate isomerase from Corynebacterium efficiens (strain DSM 44549 / YS-314 / AJ 12310 / JCM 11189 / NBRC 100395).